Here is a 343-residue protein sequence, read N- to C-terminus: MDFLVLFLLYLALVLLGFVMICIGSKTHYLQGLISRGAQVFSYIIPECLQRAMLSVLHYLFHTRNYTFVVLHLILQGMVYTEYTWEIFGLCQQLEFSLYYLFLPYLLLIVNLLFFTLSCVTNPGTITKANELLFLQVYEFDGVMFPKNVRCPTCDLRKPARSKHCSVCNRCVHRFDHHCVWVNNCIGAWNTRYFLSYLFTLTASAATMAVVSTVFLVRLVVMSDVYLQTYVDDLGHLQVVDTVFLVQYLFLTFPRIVFLVGFVVVLSFLLGGYLCFCLYLAATNQTTNEWYKGDRAWCQHCPHVARPPAAEPQAYRNIHSHGLWSNLREIFLPATACYERKEK.

Topologically, residues 1-2 are lumenal; it reads MD. Residues 3 to 23 form a helical membrane-spanning segment; that stretch reads FLVLFLLYLALVLLGFVMICI. Residues 24-67 lie on the Cytoplasmic side of the membrane; the sequence is GSKTHYLQGLISRGAQVFSYIIPECLQRAMLSVLHYLFHTRNYT. Residues 68–88 form a helical membrane-spanning segment; sequence FVVLHLILQGMVYTEYTWEIF. At 89–95 the chain is on the lumenal side; it reads GLCQQLE. The chain crosses the membrane as a helical span at residues 96-116; that stretch reads FSLYYLFLPYLLLIVNLLFFT. Topologically, residues 117 to 196 are cytoplasmic; it reads LSCVTNPGTI…GAWNTRYFLS (80 aa). A DHHC domain is found at 149–199; that stretch reads VRCPTCDLRKPARSKHCSVCNRCVHRFDHHCVWVNNCIGAWNTRYFLSYLF. Cys179 acts as the S-palmitoyl cysteine intermediate in catalysis. Residues 197–217 traverse the membrane as a helical segment; that stretch reads YLFTLTASAATMAVVSTVFLV. Topologically, residues 218-255 are lumenal; it reads RLVVMSDVYLQTYVDDLGHLQVVDTVFLVQYLFLTFPR. A helical membrane pass occupies residues 256-276; the sequence is IVFLVGFVVVLSFLLGGYLCF. The Cytoplasmic portion of the chain corresponds to 277-343; sequence CLYLAATNQT…ATACYERKEK (67 aa). Positions 340–343 match the Di-lysine motif motif; that stretch reads RKEK.

This sequence belongs to the DHHC palmitoyltransferase family. In terms of assembly, interacts with CPT1A.

It localises to the endoplasmic reticulum membrane. The protein resides in the golgi apparatus membrane. It is found in the cell membrane. The catalysed reaction is L-cysteinyl-[protein] + hexadecanoyl-CoA = S-hexadecanoyl-L-cysteinyl-[protein] + CoA. Functionally, palmitoyltransferase that could catalyze the addition of palmitate onto protein substrates including the D(2) dopamine receptor DRD2, GSK3B or MAVS. Mediates GSK3B palmitoylation to prevent its AKT1-mediated phosphorylation leading to activation of the STAT3 signaling pathway. Also catalyzes MAVS palmitoylation which promotes its stabilization and activation by inhibiting 'Lys-48'- but facilitating 'Lys-63'-linked ubiquitination. The sequence is that of Palmitoyltransferase ZDHHC4 from Bos taurus (Bovine).